Here is a 68-residue protein sequence, read N- to C-terminus: Dermaseptin-H5 (68 aa).

The N-terminal stretch at 1 to 17 (KSLFLVLFLGMVSLSIC) is a signal peptide. A propeptide spanning residues 18-38 (EEEKRENEDEEKQEDDEQSEM) is cleaved from the precursor. Positions 19-40 (EEKRENEDEEKQEDDEQSEMKR) are disordered. Over residues 25 to 35 (EDEEKQEDDEQ) the composition is skewed to acidic residues. Leucine 65 is subject to Leucine amide. Residues 67 to 68 (EQ) constitute a propeptide that is removed on maturation.

As to expression, expressed by the skin glands.

Its subcellular location is the secreted. Functionally, has antibacterial activity against the Gram-negative bacteria E.coli ATCC 11775 (MIC=0.5 uM), and the Gram-positive bacteria S.aureus ATCC 12600 (MIC=0.5 uM) and M.luteus ATCC 49732 (MIC=2.0 uM). Does not inhibit the growth of the fungus C.albicans. Probably acts by disturbing membrane functions with its amphipathic structure. In Pithecopus azureus (Orange-legged monkey tree frog), this protein is Dermaseptin-H5.